The sequence spans 509 residues: Histidine--tRNA ligase, cytoplasmic (509 aa).

A2 carries the N-acetylalanine modification. Residues 3–59 enclose the WHEP-TRS domain; sequence DRAALEDLVRVQGERVRGLKQQKASAEQIEEEVAKLLKLKAQLGPDEGKPKFVLKTP. The residue at position 66 (S66) is a Phosphoserine. Residues 130 to 132, R157, Q173, D177, R326, and 330 to 331 contribute to the L-histidine site; these read DLT and YY. S356 carries the phosphoserine modification.

Belongs to the class-II aminoacyl-tRNA synthetase family. In terms of assembly, homodimer.

The protein localises to the cytoplasm. It carries out the reaction tRNA(His) + L-histidine + ATP = L-histidyl-tRNA(His) + AMP + diphosphate + H(+). Its function is as follows. Catalyzes the ATP-dependent ligation of histidine to the 3'-end of its cognate tRNA, via the formation of an aminoacyl-adenylate intermediate (His-AMP). Plays a role in axon guidance. The polypeptide is Histidine--tRNA ligase, cytoplasmic (HARS1) (Bos taurus (Bovine)).